A 150-amino-acid polypeptide reads, in one-letter code: 6,7-dimethyl-8-ribityllumazine synthase (150 aa).

5-amino-6-(D-ribitylamino)uracil is bound by residues F11, 43–45 (TYE), and 67–69 (AVI). A (2S)-2-hydroxy-3-oxobutyl phosphate-binding site is contributed by 72 to 73 (AT). Catalysis depends on H75, which acts as the Proton donor. Residue L100 coordinates 5-amino-6-(D-ribitylamino)uracil. (2S)-2-hydroxy-3-oxobutyl phosphate is bound at residue R115.

This sequence belongs to the DMRL synthase family.

It carries out the reaction (2S)-2-hydroxy-3-oxobutyl phosphate + 5-amino-6-(D-ribitylamino)uracil = 6,7-dimethyl-8-(1-D-ribityl)lumazine + phosphate + 2 H2O + H(+). Its pathway is cofactor biosynthesis; riboflavin biosynthesis; riboflavin from 2-hydroxy-3-oxobutyl phosphate and 5-amino-6-(D-ribitylamino)uracil: step 1/2. In terms of biological role, catalyzes the formation of 6,7-dimethyl-8-ribityllumazine by condensation of 5-amino-6-(D-ribitylamino)uracil with 3,4-dihydroxy-2-butanone 4-phosphate. This is the penultimate step in the biosynthesis of riboflavin. The sequence is that of 6,7-dimethyl-8-ribityllumazine synthase from Staphylothermus marinus (strain ATCC 43588 / DSM 3639 / JCM 9404 / F1).